A 487-amino-acid chain; its full sequence is L-tartrate/succinate antiporter (487 aa).

14 helical membrane passes run 10–30 (YLAP…AGLE), 33–53 (TWLY…EPVP), 54–74 (GAVV…WLLF), 93–113 (WAVF…FMFG), 137–157 (TLFL…VTPS), 189–209 (IGSY…AIFL), 236–256 (FLGM…LAYV), 292–312 (LMVG…AAMV), 313–333 (GYSV…DIVS), 340–360 (VFFW…TGFI), 370–390 (SLSG…FYLL), 393–413 (FFAS…AAAL), 418–438 (IPLP…SILT), and 465–485 (IFGL…MPVV).

The protein belongs to the SLC13A/DASS transporter (TC 2.A.47) family. DIT1 subfamily.

The protein localises to the cell inner membrane. It carries out the reaction (2R,3R)-tartrate(out) + succinate(in) = (2R,3R)-tartrate(in) + succinate(out). Catalyzes the uptake of tartrate in exchange for intracellular succinate. Essential for anaerobic L-tartrate fermentation. The sequence is that of L-tartrate/succinate antiporter (ttdT) from Shigella boydii serotype 4 (strain Sb227).